The sequence spans 143 residues: MFMGEYEHQLDAKGRMIIPSKFRYDLNERFIITRGLDKCLFGYTLEEWQQIEEKMKTLPMTKKDARKFMRMFFSGAIEVELDKQGRINIPQNLRKYASLTKECTVIGVSNRIEIWDRETWNDFYDESEESFEDIAEDLIDFDF.

2 consecutive SpoVT-AbrB domains span residues 5–47 (EYEH…TLEE) and 76–119 (AIEV…DRET).

This sequence belongs to the MraZ family. Forms oligomers.

It localises to the cytoplasm. The protein localises to the nucleoid. This is Transcriptional regulator MraZ from Staphylococcus haemolyticus (strain JCSC1435).